Reading from the N-terminus, the 319-residue chain is Epoxyqueuosine reductase (319 aa).

D146 functions as the Proton donor in the catalytic mechanism. The 4Fe-4S ferredoxin-type domain maps to 188–220; it reads ASLPADQPARSLCGHCQRCLPACPTAAITEPFV. Residues C200, C203, C206, C210, C226, C250, C253, and C257 each coordinate [4Fe-4S] cluster.

The protein belongs to the QueG family. As to quaternary structure, monomer. Cob(II)alamin is required as a cofactor. Requires [4Fe-4S] cluster as cofactor.

It localises to the cytoplasm. The catalysed reaction is epoxyqueuosine(34) in tRNA + AH2 = queuosine(34) in tRNA + A + H2O. It functions in the pathway tRNA modification; tRNA-queuosine biosynthesis. Catalyzes the conversion of epoxyqueuosine (oQ) to queuosine (Q), which is a hypermodified base found in the wobble positions of tRNA(Asp), tRNA(Asn), tRNA(His) and tRNA(Tyr). The chain is Epoxyqueuosine reductase from Synechococcus sp. (strain RCC307).